An 83-amino-acid chain; its full sequence is Aminoacyl carrier protein (83 aa).

A Carrier domain is found at 1–80; the sequence is MNATIREILA…DTVKLILDGK (80 aa). Ser-35 bears the O-(pantetheine 4'-phosphoryl)serine mark.

4'-phosphopantetheine is transferred from CoA to a specific serine of the apo-form of this carrier protein.

Its function is as follows. Aminoacyl carrier protein. Can be charged with L-alanine, L-glycine or L-serine, via the formation of a thioester bond between the amino acid and the 4'-phosphopantetheinyl prosthetic group, catalyzed by the Atu2573 ligase. This is Aminoacyl carrier protein from Agrobacterium fabrum (strain C58 / ATCC 33970) (Agrobacterium tumefaciens (strain C58)).